The sequence spans 98 residues: Large ribosomal subunit protein eL30 (98 aa).

It belongs to the eukaryotic ribosomal protein eL30 family.

This is Large ribosomal subunit protein eL30 (rpl30e) from Methanothermobacter thermautotrophicus (strain ATCC 29096 / DSM 1053 / JCM 10044 / NBRC 100330 / Delta H) (Methanobacterium thermoautotrophicum).